The chain runs to 264 residues: MEMO1 family protein Mbur_2394 (264 aa).

The protein belongs to the MEMO1 family.

The protein is MEMO1 family protein Mbur_2394 of Methanococcoides burtonii (strain DSM 6242 / NBRC 107633 / OCM 468 / ACE-M).